The sequence spans 230 residues: Sugar fermentation stimulation protein homolog (230 aa).

This sequence belongs to the SfsA family.

The protein is Sugar fermentation stimulation protein homolog of Clostridium perfringens (strain SM101 / Type A).